The sequence spans 200 residues: Recombination protein RecR (200 aa).

The C4-type zinc finger occupies 59–74 (CSTCGNIDSQNPCTVC). In terms of domain architecture, Toprim spans 82-177 (SIIVVVADVA…KVTRLAHGVP (96 aa)).

This sequence belongs to the RecR family.

Its function is as follows. May play a role in DNA repair. It seems to be involved in an RecBC-independent recombinational process of DNA repair. It may act with RecF and RecO. The protein is Recombination protein RecR of Rhodopseudomonas palustris (strain ATCC BAA-98 / CGA009).